Reading from the N-terminus, the 183-residue chain is ATP synthase subunit delta, chloroplastic (183 aa).

Belongs to the ATPase delta chain family. In terms of assembly, F-type ATPases have 2 components, F(1) - the catalytic core - and F(0) - the membrane proton channel. F(1) has five subunits: alpha(3), beta(3), gamma(1), delta(1), epsilon(1). CF(0) has four main subunits: a(1), b(1), b'(1) and c(10-14). The alpha and beta chains form an alternating ring which encloses part of the gamma chain. F(1) is attached to F(0) by a central stalk formed by the gamma and epsilon chains, while a peripheral stalk is formed by the delta, b and b' chains.

It localises to the plastid. Its subcellular location is the chloroplast thylakoid membrane. F(1)F(0) ATP synthase produces ATP from ADP in the presence of a proton or sodium gradient. F-type ATPases consist of two structural domains, F(1) containing the extramembraneous catalytic core and F(0) containing the membrane proton channel, linked together by a central stalk and a peripheral stalk. During catalysis, ATP synthesis in the catalytic domain of F(1) is coupled via a rotary mechanism of the central stalk subunits to proton translocation. Functionally, this protein is part of the stalk that links CF(0) to CF(1). It either transmits conformational changes from CF(0) to CF(1) or is implicated in proton conduction. The protein is ATP synthase subunit delta, chloroplastic of Cyanidium caldarium (Red alga).